The following is a 404-amino-acid chain: Tryptophan synthase beta chain (404 aa).

At Lys98 the chain carries N6-(pyridoxal phosphate)lysine.

The protein belongs to the TrpB family. As to quaternary structure, tetramer of two alpha and two beta chains. Requires pyridoxal 5'-phosphate as cofactor.

It catalyses the reaction (1S,2R)-1-C-(indol-3-yl)glycerol 3-phosphate + L-serine = D-glyceraldehyde 3-phosphate + L-tryptophan + H2O. It functions in the pathway amino-acid biosynthesis; L-tryptophan biosynthesis; L-tryptophan from chorismate: step 5/5. Functionally, the beta subunit is responsible for the synthesis of L-tryptophan from indole and L-serine. The protein is Tryptophan synthase beta chain of Rhodopseudomonas palustris (strain BisB18).